The following is a 37-amino-acid chain: Potassium channel toxin alpha-KTx 15.3 (37 aa).

Pyrrolidone carboxylic acid is present on Gln-1. Cystine bridges form between Cys-8-Cys-28, Cys-13-Cys-33, and Cys-17-Cys-35.

Expressed by the venom gland.

Its subcellular location is the secreted. Its function is as follows. Inhibits A-type (Kv4) voltage-gated potassium channels of striated neurons (Ki=131 nM), probably by acting as a pore blocker. Has also been shown to block ERG1/Kv11.1/KCNH2 potassium channels (IC(50)=7.9 uM). The presence of the Kv4-associated proteins DPP6 or DPP10 is mandatory to have high-affinity blockade of Kv4.2/KCND2 and Kv4.3/KCND3 channels (80-90% inhibition at 500 nM of toxin). In contrast, the presence of the Kv4-associated protein KChIP1/KCNIP1 does not enhance the affinity blockade (only 40% inhibition at 500 nM). In adult rat brain, the toxin binds to sites in the striatum, and cerebellum. It shares the same target in rat brain than AaTX1 (AC Q867F4) and BmTX3 (AC Q8I0L5). In DPP6 knockout mice, A-type currents are about 20-fold less affected by the toxin. In rodent models of Parkinson's disease, the toxin reduces motor symptoms and emotional and cognitive symptoms. This Androctonus mauritanicus mauritanicus (Scorpion) protein is Potassium channel toxin alpha-KTx 15.3.